The primary structure comprises 436 residues: Lactonohydrolase oryL (436 aa).

The N-terminal stretch at 1 to 27 (MLSYTSHCLQALLGVASLPYRQYQAYS) is a signal peptide.

The protein belongs to the SMP-30/CGR1 family.

It participates in secondary metabolite biosynthesis. In terms of biological role, lactonohydrolase; part of the gene cluster that mediates the biosynthesis of oryzines, natural products with an unusual maleidride backbone. The two subunits of the fungal fatty acid synthase oryfasA and oryfasB probably form octenoic acid. This fatty acid is most likely activated by the acyl-CoA ligase oryP to give octenyl-CoA before the citrate synthase-like protein oryE catalyzes condensation with oxaloacetate to form tricarboxylic acid. The next steps of the pathways are conjectural, but a favorite possible route has been proposed, beginning with decarboxylation and concomitant dehydration by the decarboxylase oryM, followed by tautomerization, which may lead to the production of a diene intermediate. Reduction of this diene intermediate could give the known metabolite piliformic acid. On the pathway to oryzine B and oryzine A, however, hydroxylation of the diene by the alpha-ketoglutarate-dependent dioxygenase oryG and lactonisation by the lactonohydrolases oryH or oryL could give oryzine B directly. Finally, enoyl reduction by the dehydrogenase oryD would then convert oryzine B into oryzine A. This Aspergillus oryzae (strain ATCC 42149 / RIB 40) (Yellow koji mold) protein is Lactonohydrolase oryL.